A 227-amino-acid polypeptide reads, in one-letter code: Esterase OVCA2 (227 aa).

Active-site charge relay system residues include Ser-120, Asp-180, and His-207.

It belongs to the LovG family.

It carries out the reaction a carboxylic ester + H2O = an alcohol + a carboxylate + H(+). In terms of biological role, exhibits ester hydrolase activity with a strong preference for long-chain alkyl ester substrates and high selectivity against a variety of short, branched, and substituted esters. Is able to hydrolyze ester bonds within a wide range of p-nitrophenyl derivatives (C2-C14) in vitro, with a strong preference toward substrates of &gt;8 carbons. This Danio rerio (Zebrafish) protein is Esterase OVCA2 (ovca2).